The following is a 180-amino-acid chain: Stathmin-3 (180 aa).

Residues cysteine 22 and cysteine 24 are each lipidated (S-palmitoyl cysteine). Residues 38–180 (GDMEVKQLDK…NKEQREEMSG (143 aa)) enclose the SLD domain. Phosphoserine occurs at positions 50, 60, 65, 68, 72, 73, and 81. A compositionally biased stretch (low complexity) spans 60–74 (SPSDLSPESPVLSSP). The interval 60–81 (SPSDLSPESPVLSSPPKRKDAS) is disordered. A coiled-coil region spans residues 75–179 (PKRKDASLEE…RNKEQREEMS (105 aa)).

This sequence belongs to the stathmin family. As to quaternary structure, interacts with STAT3. Interacts with CLU (secreted form); this interaction may act as an important modulator during neuronal differentiation. In terms of processing, N-terminal palmitoylation promotes specific anchoring to the cytosolic leaflet of Golgi membranes and subsequent vesicular trafficking along dendrites and axons. Neuronal Stathmins are substrates for palmitoyltransferases ZDHHC3, ZDHHC7 and ZDHHC15. In terms of tissue distribution, neuron specific.

Its subcellular location is the golgi apparatus. It localises to the cell projection. The protein resides in the growth cone. It is found in the axon. The protein localises to the cytoplasm. Its subcellular location is the cytosol. Its function is as follows. Exhibits microtubule-destabilizing activity, which is antagonized by STAT3. This Mus musculus (Mouse) protein is Stathmin-3 (Stmn3).